The following is a 139-amino-acid chain: NADPH-dependent 7-cyano-7-deazaguanine reductase (139 aa).

Residue Cys34 is the Thioimide intermediate of the active site. Residue Asp41 is the Proton donor of the active site. Substrate contacts are provided by residues 56 to 58 (VEL) and 75 to 76 (HE).

The protein belongs to the GTP cyclohydrolase I family. QueF type 1 subfamily.

The protein localises to the cytoplasm. The enzyme catalyses 7-aminomethyl-7-carbaguanine + 2 NADP(+) = 7-cyano-7-deazaguanine + 2 NADPH + 3 H(+). It functions in the pathway tRNA modification; tRNA-queuosine biosynthesis. Catalyzes the NADPH-dependent reduction of 7-cyano-7-deazaguanine (preQ0) to 7-aminomethyl-7-deazaguanine (preQ1). The chain is NADPH-dependent 7-cyano-7-deazaguanine reductase from Methylobacillus flagellatus (strain ATCC 51484 / DSM 6875 / VKM B-1610 / KT).